A 274-amino-acid polypeptide reads, in one-letter code: MRLYTQVVAASLVATLAIVDSKVSNAIAGQGNNLRFLRQDNATVARVSEDGERGGLLADEKDIMAIADHLIRLNYSLSYARKVLGKFANYEYAIAKVEEKIKKRTVSYMFLDEKFLTQEEAEGKFIEWILEGKTQEQLEREFDIFTRPESKRAKKIQEVNKFAIRAYLDWLRNLRARSFRMTMMEYTNPSNAFATFDRHGHSRNKILSMFDAWVAKGTLLDVVKDRLGFNKPMKPADMFHSDNFVAYATYAQMLREKNNSLRPPRLDSVSTPSN.

The N-terminal stretch at 1–21 is a signal peptide; sequence MRLYTQVVAASLVATLAIVDS. A RxLR-dEER motif is present at residues 35–53; the sequence is RFLRQDNATVARVSEDGER. N-linked (GlcNAc...) asparagine glycans are attached at residues asparagine 41, asparagine 74, and asparagine 258.

It belongs to the RxLR effector family.

It is found in the secreted. Its subcellular location is the host nucleus. It localises to the host cytoplasm. Functionally, secreted effector that completely suppresses the host cell death induced by cell death-inducing proteins. The chain is Secreted RxLR effector protein 40 from Plasmopara viticola (Downy mildew of grapevine).